The primary structure comprises 185 residues: ATP synthase subunit delta (185 aa).

Belongs to the ATPase delta chain family. As to quaternary structure, F-type ATPases have 2 components, F(1) - the catalytic core - and F(0) - the membrane proton channel. F(1) has five subunits: alpha(3), beta(3), gamma(1), delta(1), epsilon(1). CF(0) has four main subunits: a(1), b(1), b'(1) and c(10-14). The alpha and beta chains form an alternating ring which encloses part of the gamma chain. F(1) is attached to F(0) by a central stalk formed by the gamma and epsilon chains, while a peripheral stalk is formed by the delta, b and b' chains.

The protein localises to the cellular thylakoid membrane. F(1)F(0) ATP synthase produces ATP from ADP in the presence of a proton or sodium gradient. F-type ATPases consist of two structural domains, F(1) containing the extramembraneous catalytic core and F(0) containing the membrane proton channel, linked together by a central stalk and a peripheral stalk. During catalysis, ATP synthesis in the catalytic domain of F(1) is coupled via a rotary mechanism of the central stalk subunits to proton translocation. Functionally, this protein is part of the stalk that links CF(0) to CF(1). It either transmits conformational changes from CF(0) to CF(1) or is implicated in proton conduction. This is ATP synthase subunit delta from Cyanothece sp. (strain PCC 7425 / ATCC 29141).